We begin with the raw amino-acid sequence, 292 residues long: GTP cyclohydrolase FolE2 (292 aa).

It belongs to the GTP cyclohydrolase IV family.

It carries out the reaction GTP + H2O = 7,8-dihydroneopterin 3'-triphosphate + formate + H(+). The protein operates within cofactor biosynthesis; 7,8-dihydroneopterin triphosphate biosynthesis; 7,8-dihydroneopterin triphosphate from GTP: step 1/1. Its function is as follows. Converts GTP to 7,8-dihydroneopterin triphosphate. The polypeptide is GTP cyclohydrolase FolE2 (Staphylococcus epidermidis (strain ATCC 12228 / FDA PCI 1200)).